Here is a 417-residue protein sequence, read N- to C-terminus: Transmembrane protease serine 11D (417 aa).

Topologically, residues M1–F17 are cytoplasmic. The chain crosses the membrane as a helical; Signal-anchor for type II membrane protein span at residues M18 to I38. Residues H39–I417 are Extracellular-facing. One can recognise an SEA domain in the interval R46 to Q162. Disulfide bonds link C172–C291, C211–C227, C336–C352, and C363–C392. Residues I186–G416 enclose the Peptidase S1 domain. Residues H226 and D271 each act as charge relay system in the active site. The Charge relay system role is filled by S367.

Belongs to the peptidase S1 family. Monomer. In terms of tissue distribution, isoform 1 and isoform 2 are expressed in the esophagus, tongue and trachea. Isoform 2 is also highly expressed in the adrenal cortex and heart.

It localises to the cell membrane. The protein resides in the secreted. May play some biological role in the host defense system on the mucous membrane independently of or in cooperation with other substances in airway mucous or bronchial secretions. Plays a role in the proteolytic processing of ACE2. Preferentially cleaves the C-terminal side of arginine residues at the P1 position of certain peptides. Isoform 2 may play a key role in regulating adrenal proliferation by specifically cleaving N-POMC. The sequence is that of Transmembrane protease serine 11D (Tmprss11d) from Rattus norvegicus (Rat).